A 203-amino-acid chain; its full sequence is MGHEAKHPIIIGITGNIGSGKSTVAALLRSWGYPVLDLDALAARARENKEEELKRLFPEAVVGGRLDRRALARLVFSDPERLKALEAVVHPEVRRLLMEELSRLEAPLVFLEIPLLFEKGWEGRLHGTLLVAAPLEERVRRVMARSGLSREEVLARERAQMPEEEKRKRATWVLENTGSLEDLERALKAVLAELTGGAKGGRG.

The DPCK domain maps to 10-203; sequence IIGITGNIGS…LTGGAKGGRG (194 aa). 18 to 23 is a binding site for ATP; it reads GSGKST.

Belongs to the CoaE family.

The protein resides in the cytoplasm. The enzyme catalyses 3'-dephospho-CoA + ATP = ADP + CoA + H(+). Its pathway is cofactor biosynthesis; coenzyme A biosynthesis; CoA from (R)-pantothenate: step 5/5. Catalyzes the phosphorylation of the 3'-hydroxyl group of dephosphocoenzyme A to form coenzyme A. The protein is Dephospho-CoA kinase of Thermus thermophilus (strain ATCC BAA-163 / DSM 7039 / HB27).